A 258-amino-acid polypeptide reads, in one-letter code: MFKVRVIPCLDVKDGRVVKGVNFVDLRDAGDPVEAAIAYDAAGADELTFLDITATHENRGIMLDVVRRTAEACFMPVTVGGGVRTIEDIRTLLRSGADKVSINSAAVSRREFVKEASEKFGDQCIVVAIDAKRVSRTGGTDRWEIFTHGGRRSTGIDAIEYAQEVASLGAGEILLTSMDRDGTRQGFDLPLTRRVADSVPVPVIASGGVGNLDHLVDGIREGHATAVLAASIFHFGEFTIRQAKEHMVRAGLAMRLDP.

Catalysis depends on residues aspartate 11 and aspartate 130.

Belongs to the HisA/HisF family. As to quaternary structure, heterodimer of HisH and HisF.

The protein localises to the cytoplasm. The enzyme catalyses 5-[(5-phospho-1-deoxy-D-ribulos-1-ylimino)methylamino]-1-(5-phospho-beta-D-ribosyl)imidazole-4-carboxamide + L-glutamine = D-erythro-1-(imidazol-4-yl)glycerol 3-phosphate + 5-amino-1-(5-phospho-beta-D-ribosyl)imidazole-4-carboxamide + L-glutamate + H(+). It participates in amino-acid biosynthesis; L-histidine biosynthesis; L-histidine from 5-phospho-alpha-D-ribose 1-diphosphate: step 5/9. Its function is as follows. IGPS catalyzes the conversion of PRFAR and glutamine to IGP, AICAR and glutamate. The HisF subunit catalyzes the cyclization activity that produces IGP and AICAR from PRFAR using the ammonia provided by the HisH subunit. The sequence is that of Imidazole glycerol phosphate synthase subunit HisF from Nitrobacter winogradskyi (strain ATCC 25391 / DSM 10237 / CIP 104748 / NCIMB 11846 / Nb-255).